Consider the following 795-residue polypeptide: Volume-regulated anion channel subunit LRRC8E (795 aa).

The Cytoplasmic portion of the chain corresponds to 1–22 (MIPVAEFKQFTEQQPAFKVLKP). The chain crosses the membrane as a helical span at residues 23–43 (WWDVLAEYLTVAMLMIGVFGC). Residues 44 to 116 (TLQVTQDKII…YETALHWYAK (73 aa)) are Extracellular-facing. The cysteines at positions 54 and 300 are disulfide-linked. N-linked (GlcNAc...) asparagine glycosylation occurs at Asn-63. Residues 117 to 137 (YFPYLVVIHTLIFMVCTSFWF) form a helical membrane-spanning segment. Residues 138 to 264 (KFPGTSSKIE…IRQTVLKVCK (127 aa)) lie on the Cytoplasmic side of the membrane. Residues 265–285 (FFAILVYNLIYVEKISFLVAC) form a helical membrane-spanning segment. Topologically, residues 286 to 312 (RVETSEITGYASFCCNHTKAHLFSKLA) are extracellular. N-linked (GlcNAc...) asparagine glycosylation is present at Asn-301. The chain crosses the membrane as a helical span at residues 313-333 (FCYISFVCVYGITCLYTLYWL). At 334–795 (FHRPLKEYSF…AEVREKMEEE (462 aa)) the chain is on the cytoplasmic side. LRR repeat units lie at residues 535 to 556 (QLKV…TDVA), 558 to 578 (HLQR…NSLK), 582 to 603 (VLRE…IFSL), 605 to 626 (ALQE…LSFQ), 630 to 651 (KLVT…VRKL), 653 to 674 (SLEQ…LGQC), 676 to 697 (GLRL…LGLL), 699 to 720 (SLQH…LFFC), 722 to 744 (KLRT…AALQ), and 745 to 766 (ALSR…LGDC).

This sequence belongs to the LRRC8 family. In terms of assembly, heterohexamer; oligomerizes with other LRRC8 proteins (LRRC8A, LRRC8C, LRRC8D and/or LRRC8B) to form a heterohexamer. In vivo, the subunit composition may depend primarily on expression levels, and heterooligomeric channels containing various proportions of the different LRRC8 proteins may coexist.

The protein resides in the cell membrane. It is found in the endoplasmic reticulum membrane. Its subcellular location is the lysosome membrane. It catalyses the reaction chloride(in) = chloride(out). It carries out the reaction iodide(out) = iodide(in). The catalysed reaction is taurine(out) = taurine(in). The enzyme catalyses 2',3'-cGAMP(out) = 2',3'-cGAMP(in). Functionally, non-essential component of the volume-regulated anion channel (VRAC, also named VSOAC channel), an anion channel required to maintain a constant cell volume in response to extracellular or intracellular osmotic changes. The VRAC channel conducts iodide better than chloride and can also conduct organic osmolytes like taurine. Mediates efflux of amino acids, such as aspartate, in response to osmotic stress. The VRAC channel also mediates transport of immunoreactive cyclic dinucleotide GMP-AMP (2'-3'-cGAMP), an immune messenger produced in response to DNA virus in the cytosol. Channel activity requires LRRC8A plus at least one other family member (LRRC8B, LRRC8C, LRRC8D or LRRC8E); channel characteristics depend on the precise subunit composition. Also plays a role in lysosome homeostasis by forming functional lysosomal VRAC channels in response to low cytoplasmic ionic strength condition: lysosomal VRAC channels are necessary for the formation of large lysosome-derived vacuoles, which store and then expel excess water to maintain cytosolic water homeostasis. This is Volume-regulated anion channel subunit LRRC8E from Mus musculus (Mouse).